Reading from the N-terminus, the 309-residue chain is p-hydroxybenzoic acid efflux pump subunit AaeA (309 aa).

Residues 12–32 (AITVVLVILAFIAIFNAWVYY) traverse the membrane as a helical segment.

This sequence belongs to the membrane fusion protein (MFP) (TC 8.A.1) family.

It localises to the cell inner membrane. Its function is as follows. Forms an efflux pump with AaeB. The sequence is that of p-hydroxybenzoic acid efflux pump subunit AaeA from Escherichia coli O157:H7.